The chain runs to 287 residues: Acetylglutamate kinase (287 aa).

Substrate is bound by residues 70 to 71, Arg92, and Asn184; that span reads GG.

Belongs to the acetylglutamate kinase family. ArgB subfamily.

Its subcellular location is the cytoplasm. It carries out the reaction N-acetyl-L-glutamate + ATP = N-acetyl-L-glutamyl 5-phosphate + ADP. It functions in the pathway amino-acid biosynthesis; L-arginine biosynthesis; N(2)-acetyl-L-ornithine from L-glutamate: step 2/4. Functionally, catalyzes the ATP-dependent phosphorylation of N-acetyl-L-glutamate. The sequence is that of Acetylglutamate kinase from Dinoroseobacter shibae (strain DSM 16493 / NCIMB 14021 / DFL 12).